A 558-amino-acid chain; its full sequence is Putative transport protein VC0395_A0715/VC395_1212 (558 aa).

5 helical membrane passes run 5–25 (VVLL…AIGL), 37–57 (LGNS…GFSF), 66–86 (FMLF…GIFF), 92–112 (YLIL…FGGY), and 164–184 (VGYA…AKLL). RCK C-terminal domains follow at residues 203–290 (RGLG…FRNG) and 291–374 (KEVF…KIGF). A run of 6 helical transmembrane segments spans residues 384 to 404 (LLAF…TMTF), 407 to 427 (VSFS…LGFL), 441 to 461 (ALNM…GLNA), 476 to 496 (VIGL…LVGA), 504 to 524 (ALLF…DVVN), and 537 to 557 (AGTY…FILL).

This sequence belongs to the AAE transporter (TC 2.A.81) family. YbjL subfamily.

It is found in the cell membrane. The sequence is that of Putative transport protein VC0395_A0715/VC395_1212 from Vibrio cholerae serotype O1 (strain ATCC 39541 / Classical Ogawa 395 / O395).